A 237-amino-acid polypeptide reads, in one-letter code: Endoglucanase-1 (237 aa).

The first 16 residues, 1–16 (MKAFHLLAALAGAAVA), serve as a signal peptide directing secretion. Pyrrolidone carboxylic acid is present on glutamine 17.

Belongs to the glycosyl hydrolase 12 (cellulase H) family.

The protein resides in the secreted. It catalyses the reaction Endohydrolysis of (1-&gt;4)-beta-D-glucosidic linkages in cellulose, lichenin and cereal beta-D-glucans.. The chain is Endoglucanase-1 from Aspergillus aculeatus.